The sequence spans 259 residues: 3-oxo-5-alpha-steroid 4-dehydrogenase 1 (259 aa).

Transmembrane regions (helical) follow at residues 10–30 (LCLL…SIVG), 86–106 (VLLA…PVLI), 111–131 (PTLL…GYVQ), 146–166 (VTHP…VINI), and 206–226 (WCGF…LFTL).

This sequence belongs to the steroid 5-alpha reductase family. In terms of tissue distribution, liver and prostate (at a low level).

Its subcellular location is the microsome membrane. It localises to the endoplasmic reticulum membrane. It catalyses the reaction a 3-oxo-5alpha-steroid + NADP(+) = a 3-oxo-Delta(4)-steroid + NADPH + H(+). The catalysed reaction is 5alpha-pregnane-3,20-dione + NADP(+) = progesterone + NADPH + H(+). The enzyme catalyses 17beta-hydroxy-5alpha-androstan-3-one + NADP(+) = testosterone + NADPH + H(+). It carries out the reaction androst-4-ene-3,17-dione + NADPH + H(+) = 5alpha-androstan-3,17-dione + NADP(+). Converts testosterone into 5-alpha-dihydrotestosterone and progesterone or corticosterone into their corresponding 5-alpha-3-oxosteroids. It plays a central role in sexual differentiation and androgen physiology. The sequence is that of 3-oxo-5-alpha-steroid 4-dehydrogenase 1 from Rattus norvegicus (Rat).